The primary structure comprises 142 residues: Small ribosomal subunit protein uS8c (142 aa).

Belongs to the universal ribosomal protein uS8 family. As to quaternary structure, part of the 30S ribosomal subunit.

It localises to the plastid. One of the primary rRNA binding proteins, it binds directly to 16S rRNA central domain where it helps coordinate assembly of the platform of the 30S subunit. The sequence is that of Small ribosomal subunit protein uS8c (rps8) from Euglena longa (Euglenophycean alga).